The following is a 1553-amino-acid chain: DNA topoisomerase 2-alpha (1553 aa).

A disordered region spans residues 1 to 25 (MELLDSPAPLRPLHDNPRLPKADGA). A compositionally biased stretch (basic and acidic residues) spans 12–25 (PLHDNPRLPKADGA). ATP contacts are provided by residues Asn-92, Asn-121, 149-151 (SSN), and 162-169 (GRNGYGAK). Residues 343-345 (KKK) form an interaction with DNA region. 377–379 (QTK) contacts ATP. Positions 456–573 (CTLILTEGDS…SLLRHNFLEE (118 aa)) constitute a Toprim domain. Mg(2+) is bound by residues Glu-462, Asp-542, and Asp-544. The region spanning 716 to 1163 (IPSLVDGLKP…SPSDLWKEDL (448 aa)) is the Topo IIA-type catalytic domain. Tyr-806 (O-(5'-phospho-DNA)-tyrosine intermediate) is an active-site residue. Residues 991–1000 (KLQTNLTCNS) are interaction with DNA. Disordered regions lie at residues 1095–1114 (QNKE…AATG) and 1186–1553 (TGKP…DDMF). The segment covering 1098 to 1107 (EEEEGDESGE) has biased composition (acidic residues). Basic and acidic residues predominate over residues 1242-1262 (SEKNESDEKQEGNSSGDKEPS). Acidic residues-rich tracts occupy residues 1300–1310 (SESDSESDDFE) and 1334–1349 (SDAD…EYQE). Over residues 1371-1385 (VPKEKKGKAPKEKPL) the composition is skewed to basic and acidic residues. Positions 1413-1432 (PRAQAVPKKPAAAKKGSTAK) are enriched in low complexity. The span at 1444 to 1454 (KKKAAPKAPRR) shows a compositional bias: basic residues. The segment covering 1517–1532 (SIDLTADSPAAAAPRT) has biased composition (low complexity).

It belongs to the type II topoisomerase family. In terms of assembly, homodimer. The cofactor is Mg(2+). Mn(2+) serves as cofactor. Ca(2+) is required as a cofactor.

The protein localises to the cytoplasm. The protein resides in the nucleus. It localises to the nucleoplasm. Its subcellular location is the nucleolus. It catalyses the reaction ATP-dependent breakage, passage and rejoining of double-stranded DNA.. In terms of biological role, key decatenating enzyme that alters DNA topology by binding to two double-stranded DNA molecules, generating a double-stranded break in one of the strands, passing the intact strand through the broken strand, and religating the broken strand. May play a role in the regulation of circadian rhythm. The sequence is that of DNA topoisomerase 2-alpha (TOP2A) from Gallus gallus (Chicken).